Consider the following 116-residue polypeptide: Large ribosomal subunit protein uL23 (116 aa).

It belongs to the universal ribosomal protein uL23 family. Part of the 50S ribosomal subunit. Contacts protein L29, and trigger factor when it is bound to the ribosome.

In terms of biological role, one of the early assembly proteins it binds 23S rRNA. One of the proteins that surrounds the polypeptide exit tunnel on the outside of the ribosome. Forms the main docking site for trigger factor binding to the ribosome. The chain is Large ribosomal subunit protein uL23 from Psychrobacter arcticus (strain DSM 17307 / VKM B-2377 / 273-4).